A 172-amino-acid chain; its full sequence is Stellate protein CG33243 (172 aa).

Belongs to the casein kinase 2 subunit beta family. As to quaternary structure, interacts in vitro with the casein kinase 2 alpha subunit (CkII-alpha). The relevance of such interaction is however unclear in vivo. Probably not expressed in wild-type flies. In males lacking the Y chromosome, it is testis-specific and constitutes the main component of star-shaped crystals.

Functionally, unknown. In males lacking the Y chromosome, its strong overexpression leads to the appearance of proteinaceous star-shaped crystals in the primary spermatocytes causing meiotic drive, possibly by interfering with normal casein kinase 2 activity. This chain is Stellate protein CG33243 (Ste:CG33243), found in Drosophila melanogaster (Fruit fly).